Consider the following 854-residue polypeptide: N-terminal acetyltransferase A complex subunit NAT1 (854 aa).

Serine 2 is subject to N-acetylserine. 7 TPR repeats span residues 20 to 53, 54 to 87, 91 to 124, 126 to 162, 241 to 274, 384 to 417, and 452 to 485; these read ENDQ…DGSH, VDSL…IEGA, PICC…GSTN, QIYR…RANW, FGLL…NPDN, IWTN…TPTL, and RFIN…DDSV. The stretch at 623-667 forms a coiled coil; that stretch reads LKRKSDSLDENSDEIQNNGQNSSSQKKKAKKEAAAMNKRKETEAK. A disordered region spans residues 626–668; it reads KSDSLDENSDEIQNNGQNSSSQKKKAKKEAAAMNKRKETEAKS. Position 674 is a phosphoserine (serine 674). One copy of the TPR 8 repeat lies at 728-761; it reads ALCFASLNKFAKRFGTTSGLFGSMAIVLLHATRN.

As to quaternary structure, component of the N-terminal acetyltransferase A (NatA) complex, which is composed of ARD1, NAT1 and NAT5. Can self-associate. NAT1 associates with the nascent polypeptide chain and the ribosome. Post-translationally, the N-terminus is blocked.

It localises to the cytoplasm. In terms of biological role, non-catalytic component of the NatA N-terminal acetyltransferase, which catalyzes acetylation of proteins beginning with Met-Ser, Met-Gly and Met-Ala. N-acetylation plays a role in normal eukaryotic translation and processing, protect against proteolytic degradation and protein turnover. NAT1 anchors ARD1 and NAT5 to the ribosome and may present the N termini of nascent polypeptides for acetylation. This is N-terminal acetyltransferase A complex subunit NAT1 (NAT1) from Saccharomyces cerevisiae (strain ATCC 204508 / S288c) (Baker's yeast).